Reading from the N-terminus, the 498-residue chain is Glycerol kinase (498 aa).

Residue Thr12 participates in ADP binding. Thr12, Thr13, and Ser14 together coordinate ATP. Residue Thr12 participates in sn-glycerol 3-phosphate binding. Residue Arg16 participates in ADP binding. Arg82, Glu83, Tyr134, and Asp243 together coordinate sn-glycerol 3-phosphate. Residues Arg82, Glu83, Tyr134, Asp243, and Gln244 each contribute to the glycerol site. Residues Thr265 and Gly308 each coordinate ADP. Residues Thr265, Gly308, Gln312, and Gly409 each contribute to the ATP site. Positions 409 and 413 each coordinate ADP.

It belongs to the FGGY kinase family. Homotetramer and homodimer (in equilibrium).

It carries out the reaction glycerol + ATP = sn-glycerol 3-phosphate + ADP + H(+). Its pathway is polyol metabolism; glycerol degradation via glycerol kinase pathway; sn-glycerol 3-phosphate from glycerol: step 1/1. With respect to regulation, activated by phosphorylation and inhibited by fructose 1,6-bisphosphate (FBP). In terms of biological role, key enzyme in the regulation of glycerol uptake and metabolism. Catalyzes the phosphorylation of glycerol to yield sn-glycerol 3-phosphate. The polypeptide is Glycerol kinase (Clostridium botulinum (strain Loch Maree / Type A3)).